A 356-amino-acid polypeptide reads, in one-letter code: RuBisCO accumulation factor 1 (356 aa).

Positions 9–192 (LSEEERQELL…RALIEALLLD (184 aa)) are N-terminal alpha-helix. The segment at 216-342 (PRLLPFAGTL…LVLILRPKRV (127 aa)) is C-terminal beta-sheet.

The protein belongs to the RAF family. As to quaternary structure, homodimer. Forms an RbcL(8)-Raf1(8) complex. Forms complexes of many stoichiometries with RbcL with and without RbcS. RbcX and Raf1 can bind simultaneously to RbcL.

The protein resides in the cytoplasm. Its function is as follows. A major RuBisCO chaperone. Acts after GroEL-GroES chaperonin to fold and/or assemble the large subunit of RuBisCO (ccbL, rbcL). Cooperates with RbcX in RbcL folding, plays the major role in assembly of dimers into RbcL(8)-Raf1(8) intermediate complexes. RbcS replaces Raf1, leading to holoenzyme formation. Functionally, the Raf1 dimer brackets an RbcL dimer, leading to RbcL(8)-Raf1(8) complex formation. RbcS displaces Raf1, resulting in holoenzyme formation. Probably plays a role in early carboxysome assembly; in its absence CcaA, CcmM, CcmN, RbcL and RbcS colocalize in small patches while the shell proteins CcmK2, CcmK3 and CcmK4 are found diffused in the cytoplasm. In terms of biological role, it has been suggested that Raf1 and RbcX are partially functionally redundant. Other evidence suggests they are antagonistic in mediating RuBisCO assembly. The chain is RuBisCO accumulation factor 1 from Synechococcus elongatus (strain ATCC 33912 / PCC 7942 / FACHB-805) (Anacystis nidulans R2).